Reading from the N-terminus, the 211-residue chain is Shikimate kinase (211 aa).

The tract at residues Met1–Ala23 is disordered. Position 50–55 (Gly50–Thr55) interacts with ATP. Thr54 contacts Mg(2+). Residues Asp72, Arg96, and Gly118 each contribute to the substrate site. Arg156 lines the ATP pocket. Residue Arg175 coordinates substrate.

The protein belongs to the shikimate kinase family. In terms of assembly, monomer. It depends on Mg(2+) as a cofactor.

Its subcellular location is the cytoplasm. It carries out the reaction shikimate + ATP = 3-phosphoshikimate + ADP + H(+). It functions in the pathway metabolic intermediate biosynthesis; chorismate biosynthesis; chorismate from D-erythrose 4-phosphate and phosphoenolpyruvate: step 5/7. Its function is as follows. Catalyzes the specific phosphorylation of the 3-hydroxyl group of shikimic acid using ATP as a cosubstrate. The sequence is that of Shikimate kinase from Bordetella bronchiseptica (strain ATCC BAA-588 / NCTC 13252 / RB50) (Alcaligenes bronchisepticus).